The sequence spans 368 residues: Agmatine deiminase (368 aa).

C357 functions as the Amidino-cysteine intermediate in the catalytic mechanism.

Belongs to the agmatine deiminase family. As to quaternary structure, homodimer.

The enzyme catalyses agmatine + H2O = N-carbamoylputrescine + NH4(+). It participates in amine and polyamine biosynthesis; putrescine biosynthesis via agmatine pathway; N-carbamoylputrescine from agmatine: step 1/1. Mediates the hydrolysis of agmatine into N-carbamoylputrescine in the arginine decarboxylase (ADC) pathway of putrescine biosynthesis, a basic polyamine. This chain is Agmatine deiminase, found in Pseudomonas putida (strain ATCC 47054 / DSM 6125 / CFBP 8728 / NCIMB 11950 / KT2440).